Here is a 369-residue protein sequence, read N- to C-terminus: MTVTGIVAEFNPFHNGHKYLLEQAQGIKVIAMSGNFMQRGEPAIVDKWTRSQMALENGADLVIELPFLVSVQSADYFASGAVSILARLGVDNLCFGTEEMLDYARIGDIYVNKKEEMEAFLKKQSDSLSYPQKMQAMWQEFAGITFSGQTPNHILGLAYTKAASQNGIRLNPIQRQGAGYHSSEKTEIFASATSLRKHQSDRFFVEKGMPNSDLFLNSPQVVWQDYFSLLKYQIMTHSDLTQIYQVNEEIANRIKSQIRYVETVDELVDKVATKRYTKARIRRLLTYILINAVESPIPNAIHVLGFTQKGQQHLKSVKKSVDIVTRIGSQTWDSLTQRADSVYQMGNANIAEQTWGRIPFYQPVSQSDL.

ATP contacts are provided by residues 7–20, Gly-96, Asn-152, and Arg-175; that span reads VAEF…HKYL.

It belongs to the TmcAL family.

It localises to the cytoplasm. It catalyses the reaction cytidine(34) in elongator tRNA(Met) + acetate + ATP = N(4)-acetylcytidine(34) in elongator tRNA(Met) + AMP + diphosphate. In terms of biological role, catalyzes the formation of N(4)-acetylcytidine (ac(4)C) at the wobble position of elongator tRNA(Met), using acetate and ATP as substrates. First activates an acetate ion to form acetyladenylate (Ac-AMP) and then transfers the acetyl group to tRNA to form ac(4)C34. This chain is tRNA(Met) cytidine acetate ligase, found in Streptococcus agalactiae serotype Ia (strain ATCC 27591 / A909 / CDC SS700).